Here is a 424-residue protein sequence, read N- to C-terminus: ATP-citrate synthase alpha chain protein 3 (424 aa).

The citrate site is built by N343, T345, and R376.

It belongs to the succinate/malate CoA ligase beta subunit family. In terms of assembly, heterooctamer of 4 alpha and 4 beta chains.

It localises to the cytoplasm. It is found in the cytosol. The enzyme catalyses oxaloacetate + acetyl-CoA + ADP + phosphate = citrate + ATP + CoA. ATP citrate-lyase is the primary enzyme responsible for the synthesis of cytosolic acetyl-CoA, used for the elongation of fatty acids and biosynthesis of isoprenoids, flavonoids and malonated derivatives. May supply substrate to the cytosolic acetyl-CoA carboxylase, which generates the malonyl-CoA used for the synthesis of a multitude of compounds, including very long chain fatty acids and flavonoids. Required for normal growth and development and elongation of C18 fatty acids to C20 to C24 fatty acids in seeds. In contrast to all known animal ACL enzymes having a homomeric structure, plant ACLs are composed of alpha and beta chains. The sequence is that of ATP-citrate synthase alpha chain protein 3 (ACLA-3) from Arabidopsis thaliana (Mouse-ear cress).